A 275-amino-acid chain; its full sequence is Lectin (275 aa).

An N-terminal signal peptide occupies residues 1 to 30 (MASLQTQMISFYLIFLSILLTTIFFFKVNS). D-glucose contacts are provided by D111 and G129. Mn(2+) contacts are provided by E149 and D151. Ca(2+) contacts are provided by D151, F153, N155, and D159. Mn(2+) contacts are provided by D159 and H166. A propeptide spanning residues 211-217 (NSLEEEN) is cleaved from the precursor. Residues G246 and A247 each contribute to the D-glucose site. A propeptide spanning residues 270 to 275 (KQAADA) is cleaved from the precursor.

Belongs to the leguminous lectin family. Heterotetramer of two alpha and two beta chains. Post-translationally, the mature form consists of two chains, alpha and beta, produced by cleavage of the immature protein. These remain cleaved, yet fold together to form one subunit.

Functionally, D-mannose specific lectin. The polypeptide is Lectin (Lens culinaris subsp. tomentosus (Lentil)).